The primary structure comprises 557 residues: MGDLGAGLLQAGLLLLLLAAVHVPLGDFLARTFAGTRHLRLERGIYRVLRVDADADTRWPTYALSVLGFSTVSILFLYAFLRLQGFLPLSLGRPGMEPTQAWNTAVSFVGNTNWQSYAGESTLGHLVQMAGLTVQNFLSAAVGLAVAVALVRGLVARGTGTIGNFWVDLTRGTLRVLLPLAFAGAVLLLLTGVVQNFTGATTYPTLAGGSQTILGGPIASQEAVKELGTNGGGFFNANSAHPFENPNAVSNLLEVFLILVIPFSLPRAFGTLVGDHRQGLAVLSVMGTIFGASLALTTWAETHAGGSVPQAAGAAMEGKETRFGEWASALFATATTATSTGAVNSAHDSYTAAGGGVVLLNLVMGEVTPGGVGSGLYGMLVLAVITVFVAGLMVGRTPEYLGKRIGQREITCAALYVLVTPAVLLTGTAVALSDAATRSALLNTGSHGLTEMLYAFASAANNNGSAFAGLSANTPFYNTALGLAIWLGRFLPMVLVLALAGAFAAQRTAAETAGTLPTRSPTFAGMHLAVVVVVSALTFFPALALGPIAEALTGAQS.

A run of 10 helical transmembrane segments spans residues 4–24 (LGAGLLQAGLLLLLLAAVHVP), 61–81 (TYALSVLGFSTVSILFLYAFL), 131–151 (GLTVQNFLSAAVGLAVAVALV), 174–194 (LRVLLPLAFAGAVLLLLTGVV), 253–273 (LEVFLILVIPFSLPRAFGTLV), 280–300 (LAVLSVMGTIFGASLALTTWA), 375–395 (GLYGMLVLAVITVFVAGLMVG), 412–432 (CAALYVLVTPAVLLTGTAVAL), 483–503 (LAIWLGRFLPMVLVLALAGAF), and 528–548 (LAVVVVVSALTFFPALALGPI).

It belongs to the KdpA family. As to quaternary structure, the system is composed of three essential subunits: KdpA, KdpB and KdpC.

It is found in the cell membrane. In terms of biological role, part of the high-affinity ATP-driven potassium transport (or Kdp) system, which catalyzes the hydrolysis of ATP coupled with the electrogenic transport of potassium into the cytoplasm. This subunit binds the extracellular potassium ions and delivers the ions to the membrane domain of KdpB through an intramembrane tunnel. The sequence is that of Potassium-transporting ATPase potassium-binding subunit from Kineococcus radiotolerans (strain ATCC BAA-149 / DSM 14245 / SRS30216).